A 184-amino-acid chain; its full sequence is Tumor necrosis factor alpha-induced protein 8-like protein 2 (184 aa).

Ser-3 carries the post-translational modification Phosphoserine.

This sequence belongs to the TNFAIP8 family. TNFAIP8L2 subfamily. May interact with CASP8; however, such result is unclear since could not reproduce the interaction with CASP8. Interacts with RAC1. In terms of processing, phosphorylated by TAK1/MAP3K7; this phosphorylation triggers association with BTRC and subsequent ubiquitination and degradation. Post-translationally, ubiquitinated in a BTRC-depdent manner; leading to degradation mediated through the proteasome pathway.

The protein resides in the cytoplasm. The protein localises to the nucleus. It is found in the lysosome. In terms of biological role, acts as a negative regulator of innate and adaptive immunity by maintaining immune homeostasis. Plays a regulatory role in the Toll-like signaling pathway by determining the strength of LPS-induced signaling and gene expression. Inhibits TCR-mediated T-cell activation and negatively regulate T-cell function to prevent hyperresponsiveness. Also inhibits autolysosome formation via negatively modulating MTOR activation by interacting with RAC1 and promoting the disassociation of the RAC1-MTOR complex. Plays an essential role in NK-cell biology by acting as a checkpoint and displaying an expression pattern correlating with NK-cell maturation process and by negatively regulating NK-cell maturation and antitumor immunity. Mechanistically, suppresses IL-15-triggered mTOR activity in NK-cells. This is Tumor necrosis factor alpha-induced protein 8-like protein 2 (TNFAIP8L2) from Callithrix jacchus (White-tufted-ear marmoset).